A 238-amino-acid chain; its full sequence is Ribonuclease PH (238 aa).

Phosphate is bound by residues arginine 86 and 124–126 (GTR).

This sequence belongs to the RNase PH family. In terms of assembly, homohexameric ring arranged as a trimer of dimers.

It catalyses the reaction tRNA(n+1) + phosphate = tRNA(n) + a ribonucleoside 5'-diphosphate. In terms of biological role, phosphorolytic 3'-5' exoribonuclease that plays an important role in tRNA 3'-end maturation. Removes nucleotide residues following the 3'-CCA terminus of tRNAs; can also add nucleotides to the ends of RNA molecules by using nucleoside diphosphates as substrates, but this may not be physiologically important. Probably plays a role in initiation of 16S rRNA degradation (leading to ribosome degradation) during starvation. In Agrobacterium fabrum (strain C58 / ATCC 33970) (Agrobacterium tumefaciens (strain C58)), this protein is Ribonuclease PH.